Here is a 750-residue protein sequence, read N- to C-terminus: Photosystem I P700 chlorophyll a apoprotein A1 (750 aa).

The next 8 helical transmembrane spans lie at 70 to 93 (IFSA…FHGA), 156 to 179 (LYCT…FHYH), 195 to 219 (LNHH…HVSL), 291 to 309 (IAHH…GHMY), 346 to 369 (WHAQ…HHMY), 385 to 411 (LSLF…IFMV), 433 to 455 (AIIS…LYIH), and 531 to 549 (FLVH…LILL). [4Fe-4S] cluster-binding residues include Cys-573 and Cys-582. Helical transmembrane passes span 589-610 (HVFL…HFSW) and 664-686 (LSAY…MFLF). His-675 lines the chlorophyll a' pocket. Met-683 and Tyr-691 together coordinate chlorophyll a. Phylloquinone is bound at residue Trp-692. A helical membrane pass occupies residues 724-744 (AVGVTHYLLGGIATTWAFFLA).

The protein belongs to the PsaA/PsaB family. In terms of assembly, the PsaA/B heterodimer binds the P700 chlorophyll special pair and subsequent electron acceptors. PSI consists of a core antenna complex that captures photons, and an electron transfer chain that converts photonic excitation into a charge separation. The eukaryotic PSI reaction center is composed of at least 11 subunits. The cofactor is P700 is a chlorophyll a/chlorophyll a' dimer, A0 is one or more chlorophyll a, A1 is one or both phylloquinones and FX is a shared 4Fe-4S iron-sulfur center..

The protein resides in the plastid. It localises to the chloroplast thylakoid membrane. The catalysed reaction is reduced [plastocyanin] + hnu + oxidized [2Fe-2S]-[ferredoxin] = oxidized [plastocyanin] + reduced [2Fe-2S]-[ferredoxin]. In terms of biological role, psaA and PsaB bind P700, the primary electron donor of photosystem I (PSI), as well as the electron acceptors A0, A1 and FX. PSI is a plastocyanin-ferredoxin oxidoreductase, converting photonic excitation into a charge separation, which transfers an electron from the donor P700 chlorophyll pair to the spectroscopically characterized acceptors A0, A1, FX, FA and FB in turn. Oxidized P700 is reduced on the lumenal side of the thylakoid membrane by plastocyanin. This is Photosystem I P700 chlorophyll a apoprotein A1 from Gossypium hirsutum (Upland cotton).